The following is a 150-amino-acid chain: D-aminoacyl-tRNA deacylase (150 aa).

The short motif at glycine 138–proline 139 is the Gly-cisPro motif, important for rejection of L-amino acids element.

Belongs to the DTD family. Homodimer.

The protein localises to the cytoplasm. It catalyses the reaction glycyl-tRNA(Ala) + H2O = tRNA(Ala) + glycine + H(+). The enzyme catalyses a D-aminoacyl-tRNA + H2O = a tRNA + a D-alpha-amino acid + H(+). Functionally, an aminoacyl-tRNA editing enzyme that deacylates mischarged D-aminoacyl-tRNAs. Also deacylates mischarged glycyl-tRNA(Ala), protecting cells against glycine mischarging by AlaRS. Acts via tRNA-based rather than protein-based catalysis; rejects L-amino acids rather than detecting D-amino acids in the active site. By recycling D-aminoacyl-tRNA to D-amino acids and free tRNA molecules, this enzyme counteracts the toxicity associated with the formation of D-aminoacyl-tRNA entities in vivo and helps enforce protein L-homochirality. The chain is D-aminoacyl-tRNA deacylase from Bacteroides fragilis (strain ATCC 25285 / DSM 2151 / CCUG 4856 / JCM 11019 / LMG 10263 / NCTC 9343 / Onslow / VPI 2553 / EN-2).